The chain runs to 195 residues: Molybdopterin synthase catalytic subunit (195 aa).

The segment at 1 to 37 is disordered; that stretch reads MSARPEPQPGSERNATEPLPSHLDPTTYPRTLTTTHG. A compositionally biased stretch (low complexity) spans 25 to 37; sequence PTTYPRTLTTTHG. Substrate is bound by residues 141–142, lysine 157, and 164–166; these read HR and KRE.

Belongs to the MoaE family. MOCS2B subfamily. As to quaternary structure, heterotetramer; composed of 2 small (MOCS2A) and 2 large (MOCS2B) subunits.

It is found in the cytoplasm. The enzyme catalyses 2 [molybdopterin-synthase sulfur-carrier protein]-C-terminal-Gly-aminoethanethioate + cyclic pyranopterin phosphate + H2O = molybdopterin + 2 [molybdopterin-synthase sulfur-carrier protein]-C-terminal Gly-Gly + 2 H(+). It functions in the pathway cofactor biosynthesis; molybdopterin biosynthesis. Functionally, catalytic subunit of the molybdopterin synthase complex, a complex that catalyzes the conversion of precursor Z into molybdopterin. Acts by mediating the incorporation of 2 sulfur atoms from thiocarboxylated MOCS2A into precursor Z to generate a dithiolene group. This chain is Molybdopterin synthase catalytic subunit, found in Emericella nidulans (strain FGSC A4 / ATCC 38163 / CBS 112.46 / NRRL 194 / M139) (Aspergillus nidulans).